Reading from the N-terminus, the 89-residue chain is Small ribosomal subunit protein uS15 (89 aa).

Over residues 1-10 the composition is skewed to basic and acidic residues; that stretch reads MSITAERKAE. Positions 1–24 are disordered; it reads MSITAERKAEVIQGNANKAGDTGS.

This sequence belongs to the universal ribosomal protein uS15 family. Part of the 30S ribosomal subunit. Forms a bridge to the 50S subunit in the 70S ribosome, contacting the 23S rRNA.

One of the primary rRNA binding proteins, it binds directly to 16S rRNA where it helps nucleate assembly of the platform of the 30S subunit by binding and bridging several RNA helices of the 16S rRNA. Functionally, forms an intersubunit bridge (bridge B4) with the 23S rRNA of the 50S subunit in the ribosome. The protein is Small ribosomal subunit protein uS15 of Rhodopseudomonas palustris (strain BisB5).